A 602-amino-acid polypeptide reads, in one-letter code: Elongation factor 4 (602 aa).

In terms of domain architecture, tr-type G spans 8 to 189; sequence KNIRNFSIIA…KIITTIPAPS (182 aa). Residues 20 to 25 and 136 to 139 contribute to the GTP site; these read DHGKST and NKID.

Belongs to the TRAFAC class translation factor GTPase superfamily. Classic translation factor GTPase family. LepA subfamily.

It is found in the cell inner membrane. The enzyme catalyses GTP + H2O = GDP + phosphate + H(+). In terms of biological role, required for accurate and efficient protein synthesis under certain stress conditions. May act as a fidelity factor of the translation reaction, by catalyzing a one-codon backward translocation of tRNAs on improperly translocated ribosomes. Back-translocation proceeds from a post-translocation (POST) complex to a pre-translocation (PRE) complex, thus giving elongation factor G a second chance to translocate the tRNAs correctly. Binds to ribosomes in a GTP-dependent manner. The protein is Elongation factor 4 of Helicobacter pylori (strain Shi470).